A 451-amino-acid polypeptide reads, in one-letter code: Multidrug export protein MepA (451 aa).

Helical transmembrane passes span 26-46, 54-74, 97-117, 139-159, 170-190, 194-214, 245-265, 282-302, 318-338, 355-375, 397-417, and 418-438; these read MIGT…IGFL, AISL…LFGV, SFSI…TLPF, LKVM…EQFA, IGML…IFGF, VVGA…FFII, IPAF…NLFL, LVQF…PLIA, AVIM…FTIG, ATFI…GFLF, AIII…GVIW, and SLLI…YLLR.

Belongs to the multi antimicrobial extrusion (MATE) (TC 2.A.66.1) family. MepA subfamily.

The protein resides in the cell membrane. Its function is as follows. Multidrug resistance efflux protein. Contributes to resistance to the glycylcycline antibiotic tigecycline. In Staphylococcus aureus (strain N315), this protein is Multidrug export protein MepA (mepA).